The primary structure comprises 363 residues: Type-2 angiotensin II receptor (363 aa).

Residues Met-1 to Asp-45 lie on the Extracellular side of the membrane. 5 N-linked (GlcNAc...) asparagine glycosylation sites follow: Asn-4, Asn-13, Asn-24, Asn-29, and Asn-34. 2 cysteine pairs are disulfide-bonded: Cys-35–Cys-290 and Cys-117–Cys-195. Residues Ala-46 to Cys-70 traverse the membrane as a helical segment. Over Cys-71–Ser-80 the chain is Cytoplasmic. The chain crosses the membrane as a helical span at residues Ile-81–Tyr-104. The angiotensin II site is built by Tyr-103 and Tyr-104. The Extracellular segment spans residues Ser-105–Pro-114. Residues Val-115–Val-140 traverse the membrane as a helical segment. Over Asp-141 to Gln-159 the chain is Cytoplasmic. A helical membrane pass occupies residues Ala-160–Phe-181. 3 residues coordinate angiotensin II: Arg-182, Tyr-204, and Lys-215. The Extracellular portion of the chain corresponds to Arg-182 to Gln-206. Residues Trp-207–Phe-232 traverse the membrane as a helical segment. At Gly-233–Met-257 the chain is on the cytoplasmic side. Residues Ala-258–Leu-281 form a helical membrane-spanning segment. Angiotensin II is bound at residue Asp-279. Residues Ala-282 to Ala-294 lie on the Extracellular side of the membrane. The chain crosses the membrane as a helical span at residues Val-295–Phe-320. Angiotensin II is bound at residue Asp-297. Topologically, residues Val-321–Ser-363 are cytoplasmic. A helix VIII region spans residues Arg-324–Phe-333.

This sequence belongs to the G-protein coupled receptor 1 family. Interacts with MTUS1. As to expression, in adult, highly expressed in myometrium with lower levels in adrenal gland and fallopian tube. Expressed in the cerebellum. Very highly expressed in fetal kidney and intestine.

The protein localises to the cell membrane. Its function is as follows. Receptor for angiotensin II, a vasoconstricting peptide. Signals primarily via a non-canonical G-protein- and beta-arrestin independent pathways. Cooperates with MTUS1 to inhibit ERK2 activation and cell proliferation. The protein is Type-2 angiotensin II receptor of Homo sapiens (Human).